Here is a 416-residue protein sequence, read N- to C-terminus: Gamma-glutamyl phosphate reductase (416 aa).

It belongs to the gamma-glutamyl phosphate reductase family.

It localises to the cytoplasm. It catalyses the reaction L-glutamate 5-semialdehyde + phosphate + NADP(+) = L-glutamyl 5-phosphate + NADPH + H(+). The protein operates within amino-acid biosynthesis; L-proline biosynthesis; L-glutamate 5-semialdehyde from L-glutamate: step 2/2. Its function is as follows. Catalyzes the NADPH-dependent reduction of L-glutamate 5-phosphate into L-glutamate 5-semialdehyde and phosphate. The product spontaneously undergoes cyclization to form 1-pyrroline-5-carboxylate. The chain is Gamma-glutamyl phosphate reductase from Leptospira interrogans serogroup Icterohaemorrhagiae serovar Lai (strain 56601).